The chain runs to 389 residues: Chromobox protein homolog 8 (389 aa).

Positions 11 to 69 (FAAEALLKRRIRKGRMEYLVKWKGWSQKYSTWEPEENILDARLLAAFEEREREMELYGP) constitute a Chromo domain. Residues S110 and S130 each carry the phosphoserine modification. The disordered stretch occupies residues 124–241 (LRNMGLSPPA…DDTPSGAGKF (118 aa)). Residues 145 to 189 (EAPRDRDRDRDRDRERDRERERERERERERERERERGTSRVDDKP) are compositionally biased toward basic and acidic residues. Phosphoserine occurs at positions 191, 256, 265, 311, 332, and 352. The tract at residues 298-327 (GALDPNGTRVRHGSGPPSSGGGLYRDMGAQ) is disordered.

Component of a PRC1-like complex. Interacts with RING1 RNF2, PCGF1, PCGF2, PCGF3, BMI1, PCGF5 and PCGF6. Interacts with MLLT3 and histone H3. Interacts with PHC2.

The protein localises to the nucleus. In terms of biological role, component of a Polycomb group (PcG) multiprotein PRC1-like complex, a complex class required to maintain the transcriptionally repressive state of many genes, including Hox genes, throughout development. PcG PRC1 complex acts via chromatin remodeling and modification of histones; it mediates monoubiquitination of histone H2A 'Lys-119', rendering chromatin heritably changed in its expressibility. The polypeptide is Chromobox protein homolog 8 (CBX8) (Homo sapiens (Human)).